Consider the following 513-residue polypeptide: 2-isopropylmalate synthase (513 aa).

Residues 4-266 (IEFFDTSLRD…KSPLVLAETM (263 aa)) enclose the Pyruvate carboxyltransferase domain. Mn(2+) is bound by residues aspartate 13, histidine 201, histidine 203, and asparagine 237. The interval 390 to 513 (ILNNVQIDGH…VEQISAHDGI (124 aa)) is regulatory domain.

The protein belongs to the alpha-IPM synthase/homocitrate synthase family. LeuA type 1 subfamily. As to quaternary structure, homodimer. It depends on Mn(2+) as a cofactor.

It is found in the cytoplasm. The enzyme catalyses 3-methyl-2-oxobutanoate + acetyl-CoA + H2O = (2S)-2-isopropylmalate + CoA + H(+). The protein operates within amino-acid biosynthesis; L-leucine biosynthesis; L-leucine from 3-methyl-2-oxobutanoate: step 1/4. Catalyzes the condensation of the acetyl group of acetyl-CoA with 3-methyl-2-oxobutanoate (2-ketoisovalerate) to form 3-carboxy-3-hydroxy-4-methylpentanoate (2-isopropylmalate). This is 2-isopropylmalate synthase from Lactococcus lactis subsp. cremoris (strain SK11).